A 248-amino-acid chain; its full sequence is PF03932 family protein CutC (248 aa).

This sequence belongs to the CutC family. As to quaternary structure, homodimer.

The protein localises to the cytoplasm. This chain is PF03932 family protein CutC, found in Salmonella paratyphi B (strain ATCC BAA-1250 / SPB7).